Here is a 304-residue protein sequence, read N- to C-terminus: Phosphatidylinositol mannoside acyltransferase (304 aa).

Residue His126 is the Proton acceptor of the active site. Residues His126 and Arg164 each contribute to the hexadecanoyl-CoA site. Residue Glu200 is part of the active site. The hexadecanoyl-CoA site is built by Ser206 and Glu229.

It belongs to the LpxL/LpxM/LpxP family. Monomer.

Its subcellular location is the cell inner membrane. It carries out the reaction a 2,6-O-bis(alpha-D-mannopyranosyl)-1-phosphatidyl-1D-myo-inositol + an acyl-CoA = a 2-O-(alpha-D-mannosyl)-6-O-(6-O-acyl-alpha-D-mannosyl)-1-phosphatidyl-1D-myo-inositol + CoA. It catalyses the reaction a 1,2-diacyl-sn-glycero-3-phospho-[alpha-D-mannopyranosyl-(1&lt;-&gt;6)-D-myo-inositol] + an acyl-CoA = a 1,2-diacyl-sn-glycero-3-phospho-[alpha-D-6-acyl-mannopyranosyl-(1&lt;-&gt;6)-D-myo-inositol] + CoA. Its pathway is phospholipid metabolism; phosphatidylinositol metabolism. In terms of biological role, catalyzes the transfer of a palmitoyl moiety from palmitoyl-CoA to the 6-position of the mannose ring linked to the 2-position of myo-inositol in phosphatidyl-myo-inositol monomannoside (PIM1) or dimannoside (PIM2). The protein is Phosphatidylinositol mannoside acyltransferase of Mycolicibacterium smegmatis (strain ATCC 700084 / mc(2)155) (Mycobacterium smegmatis).